The following is a 132-amino-acid chain: Replication enhancer protein (132 aa).

Belongs to the geminiviridae replication enhancer protein family. In terms of assembly, homooligomer. Interacts with the replication-associated protein (REP). Interacts with host proliferating cell nuclear antigen (PCNA). Interacts with host retinoblastoma-related protein 1 (RBR1), and may thereby deregulate the host cell cycle. Oligomerization and interaction with PCNA are necessary for optimal replication enhancement.

Its function is as follows. Increases viral DNA accumulation. Enhances infectivity and symptom expression. The polypeptide is Replication enhancer protein (Pepper huasteco yellow vein virus (PHYVV)).